The primary structure comprises 313 residues: Zinc transporter ZitB (313 aa).

Topologically, residues 1 to 20 (MAHSHSHTSSHLPEDNNARR) are cytoplasmic. Residues 21 to 41 (LLYAFGVTAGFMLVEVVGGFL) form a helical membrane-spanning segment. Residues 42 to 47 (SGSLAL) lie on the Periplasmic side of the membrane. The chain crosses the membrane as a helical span at residues 48–68 (LADAGHMLTDTAALLFALLAV). The Cytoplasmic portion of the chain corresponds to 69–89 (QFSRRPPTIRHTFGWLRLTTL). The helical transmembrane segment at 90 to 110 (AAFVNAIALVVITILIVWEAI) threads the bilayer. Topologically, residues 111–121 (ERFRTPRPVEG) are periplasmic. A helical transmembrane segment spans residues 122–142 (GMMMAIAVAGLLANILSFWLL). At 143–159 (HHGSEEKNLNVRAAALH) the chain is on the cytoplasmic side. Residues 160 to 180 (VLGDLLGSVGAIIAALIIIWT) form a helical membrane-spanning segment. Glycine 181 is a topological domain (periplasmic). Residues 182 to 202 (WTPADPILSILVSLLVLRSAW) traverse the membrane as a helical segment. Residues 203 to 313 (RLLKDSVNEL…GVSGHSHHHH (111 aa)) are Cytoplasmic-facing.

The protein belongs to the cation diffusion facilitator (CDF) transporter (TC 2.A.4) family. SLC30A subfamily.

Its subcellular location is the cell inner membrane. Functionally, involved in zinc efflux across the cytoplasmic membrane, thus reducing zinc accumulation in the cytoplasm and rendering bacteria more resistant to zinc. It may contribute to zinc homeostasis at low concentrations of zinc. The polypeptide is Zinc transporter ZitB (zitB) (Shigella flexneri).